A 262-amino-acid polypeptide reads, in one-letter code: NADPH-dependent 7-cyano-7-deazaguanine reductase (262 aa).

Residue 69–71 participates in substrate binding; the sequence is IES. Residue 71–72 participates in NADPH binding; that stretch reads SK. The active-site Thioimide intermediate is C170. D177 acts as the Proton donor in catalysis. 209–210 lines the substrate pocket; that stretch reads HE. Residue 238–239 coordinates NADPH; the sequence is RG.

Belongs to the GTP cyclohydrolase I family. QueF type 2 subfamily. Homodimer.

It is found in the cytoplasm. It carries out the reaction 7-aminomethyl-7-carbaguanine + 2 NADP(+) = 7-cyano-7-deazaguanine + 2 NADPH + 3 H(+). The protein operates within tRNA modification; tRNA-queuosine biosynthesis. Its function is as follows. Catalyzes the NADPH-dependent reduction of 7-cyano-7-deazaguanine (preQ0) to 7-aminomethyl-7-deazaguanine (preQ1). The protein is NADPH-dependent 7-cyano-7-deazaguanine reductase of Buchnera aphidicola subsp. Schizaphis graminum (strain Sg).